Here is a 201-residue protein sequence, read N- to C-terminus: Large ribosomal subunit protein uL18 (201 aa).

This sequence belongs to the universal ribosomal protein uL18 family. Part of the 50S ribosomal subunit. Contacts the 5S and 23S rRNAs.

Its function is as follows. This is one of the proteins that bind and probably mediate the attachment of the 5S RNA into the large ribosomal subunit, where it forms part of the central protuberance. The chain is Large ribosomal subunit protein uL18 from Thermococcus kodakarensis (strain ATCC BAA-918 / JCM 12380 / KOD1) (Pyrococcus kodakaraensis (strain KOD1)).